Here is a 577-residue protein sequence, read N- to C-terminus: Proline--tRNA ligase (577 aa).

Belongs to the class-II aminoacyl-tRNA synthetase family. ProS type 1 subfamily. Homodimer.

The protein localises to the cytoplasm. It catalyses the reaction tRNA(Pro) + L-proline + ATP = L-prolyl-tRNA(Pro) + AMP + diphosphate. In terms of biological role, catalyzes the attachment of proline to tRNA(Pro) in a two-step reaction: proline is first activated by ATP to form Pro-AMP and then transferred to the acceptor end of tRNA(Pro). As ProRS can inadvertently accommodate and process non-cognate amino acids such as alanine and cysteine, to avoid such errors it has two additional distinct editing activities against alanine. One activity is designated as 'pretransfer' editing and involves the tRNA(Pro)-independent hydrolysis of activated Ala-AMP. The other activity is designated 'posttransfer' editing and involves deacylation of mischarged Ala-tRNA(Pro). The misacylated Cys-tRNA(Pro) is not edited by ProRS. This chain is Proline--tRNA ligase, found in Helicobacter pylori (strain G27).